A 715-amino-acid polypeptide reads, in one-letter code: MSHRYSENNNFPYDNNQMVLDMILCSLVGVPQPISWDSVARLVPGYTPKECAKRFEELKSSGTSPVDNQYNPLMATGGIPLESLASYIKSSLLDPVDDQEDVTVGQGTISIIGRPGATTARKCSESDRCSSSLKGDSTTGSQGPNMVIHVCDEAKNLKEDFVCPRDLLVSEMKYFAEYLSTDAQRCEEVDISVHCDVHIFDWLMRYVKRSAPENENQEIPKLEPGNVISILISSEFLKMESLVEECIRYCHKNMSAIVATPCNMNCINANLLTRIANLFTHNEADDVKDKKDKFKSKIFCKKIERLFDAECKNADSPANASTLFRCCLCKRLLTKEAEKKIDCLPGRISIDQHGNIVYLHIRDKSWDVHEYLISLFEELKSWRDVYWRLWGTINWLTCSRCKQSFLCNESSHCQYHPEPAVYPGAASSLDSPGTGIYPCCNQKVLRFDPAQLPKGCKVRDHVVGLPGGGDNMSENPSCNFLSDLLQRRDVIAVPFSKDLNGDSGIVLSEEPSFKCDALLEPNTLYGQKTGEMNAFLSLKNISLQLKQQSLLSEEEDYTTGSEVTEDEVGDEEELSRKQAGRKVKPKRSAKQTKKHISSPSIHKKERQQEKASRDSSPFTVSLQRNKWDASRSLRFNQDAQREDDQRRMTEITGHLIKIRLGDLERVKAKEGKEQAGGIYARLEAQIKASAHSNTRQMNTEKIPRPKPRFGTGRPT.

Residues 21–59 (DMILCSLVGVPQPISWDSVARLVPGYTPKECAKRFEELK) form the SANT domain. In terms of domain architecture, BTB spans 146-254 (MVIHVCDEAK…ECIRYCHKNM (109 aa)). Residues 552–573 (SEEEDYTTGSEVTEDEVGDEEE) are compositionally biased toward acidic residues. 2 disordered regions span residues 552–623 (SEEE…VSLQ) and 689–715 (SAHS…GRPT). Residues 578–605 (QAGRKVKPKRSAKQTKKHISSPSIHKKE) are compositionally biased toward basic residues. Polar residues-rich tracts occupy residues 614–623 (DSSPFTVSLQ) and 690–699 (AHSNTRQMNT).

Belongs to the KIAA1841 family. Homodimer.

Negatively regulates class switch recombination or isotype switching in splenic B-cells. The sequence is that of SANT and BTB domain regulator of class switch recombination from Xenopus laevis (African clawed frog).